The primary structure comprises 288 residues: 4-diphosphocytidyl-2-C-methyl-D-erythritol kinase (288 aa).

The active site involves Lys8. Residue 92–102 participates in ATP binding; it reads PVAAGMAGGST. Asp134 is an active-site residue.

This sequence belongs to the GHMP kinase family. IspE subfamily.

The catalysed reaction is 4-CDP-2-C-methyl-D-erythritol + ATP = 4-CDP-2-C-methyl-D-erythritol 2-phosphate + ADP + H(+). Its pathway is isoprenoid biosynthesis; isopentenyl diphosphate biosynthesis via DXP pathway; isopentenyl diphosphate from 1-deoxy-D-xylulose 5-phosphate: step 3/6. In terms of biological role, catalyzes the phosphorylation of the position 2 hydroxy group of 4-diphosphocytidyl-2C-methyl-D-erythritol. The protein is 4-diphosphocytidyl-2-C-methyl-D-erythritol kinase of Clostridium perfringens (strain 13 / Type A).